We begin with the raw amino-acid sequence, 345 residues long: Biotin synthase (345 aa).

In terms of domain architecture, Radical SAM core spans 66 to 291 (PEVEVEGIIS…RTMLRFAGGR (226 aa)). [4Fe-4S] cluster is bound by residues Cys-81, Cys-85, and Cys-88. [2Fe-2S] cluster-binding residues include Cys-124, Cys-157, Cys-216, and Arg-286.

This sequence belongs to the radical SAM superfamily. Biotin synthase family. In terms of assembly, homodimer. [4Fe-4S] cluster serves as cofactor. The cofactor is [2Fe-2S] cluster.

The catalysed reaction is (4R,5S)-dethiobiotin + (sulfur carrier)-SH + 2 reduced [2Fe-2S]-[ferredoxin] + 2 S-adenosyl-L-methionine = (sulfur carrier)-H + biotin + 2 5'-deoxyadenosine + 2 L-methionine + 2 oxidized [2Fe-2S]-[ferredoxin]. Its pathway is cofactor biosynthesis; biotin biosynthesis; biotin from 7,8-diaminononanoate: step 2/2. Functionally, catalyzes the conversion of dethiobiotin (DTB) to biotin by the insertion of a sulfur atom into dethiobiotin via a radical-based mechanism. This is Biotin synthase from Mycobacterium avium (strain 104).